Here is a 141-residue protein sequence, read N- to C-terminus: Nucleoside diphosphate kinase (141 aa).

ATP is bound by residues Lys-11, Phe-59, Arg-87, Thr-93, Arg-104, and Asn-114. The active-site Pros-phosphohistidine intermediate is His-117.

This sequence belongs to the NDK family. As to quaternary structure, homotetramer. Mg(2+) serves as cofactor.

The protein localises to the cytoplasm. The enzyme catalyses a 2'-deoxyribonucleoside 5'-diphosphate + ATP = a 2'-deoxyribonucleoside 5'-triphosphate + ADP. It carries out the reaction a ribonucleoside 5'-diphosphate + ATP = a ribonucleoside 5'-triphosphate + ADP. Functionally, major role in the synthesis of nucleoside triphosphates other than ATP. The ATP gamma phosphate is transferred to the NDP beta phosphate via a ping-pong mechanism, using a phosphorylated active-site intermediate. This chain is Nucleoside diphosphate kinase, found in Alkalilimnicola ehrlichii (strain ATCC BAA-1101 / DSM 17681 / MLHE-1).